An 83-amino-acid polypeptide reads, in one-letter code: Neurotoxin LmNaTx34.5 (83 aa).

An N-terminal signal peptide occupies residues 1–15 (FILVVIALMVIEVKS). Residues 16–82 (DGYLMVRAGR…IWTYEKNTCS (67 aa)) enclose the LCN-type CS-alpha/beta domain. 4 disulfides stabilise this stretch: C29-C81, C33-C54, C40-C61, and C44-C63.

This sequence belongs to the long (4 C-C) scorpion toxin superfamily. Sodium channel inhibitor family. Beta subfamily. In terms of tissue distribution, expressed by the venom gland.

The protein resides in the secreted. Functionally, binds voltage-independently at site-4 of sodium channels (Nav) and shift the voltage of activation toward more negative potentials thereby affecting sodium channel activation and promoting spontaneous and repetitive firing. The chain is Neurotoxin LmNaTx34.5 from Lychas mucronatus (Chinese swimming scorpion).